Consider the following 229-residue polypeptide: Ribosome maturation factor RimM (229 aa).

The PRC barrel domain maps to Ala148–Tyr229.

This sequence belongs to the RimM family. As to quaternary structure, binds ribosomal protein uS19.

The protein localises to the cytoplasm. Functionally, an accessory protein needed during the final step in the assembly of 30S ribosomal subunit, possibly for assembly of the head region. Essential for efficient processing of 16S rRNA. May be needed both before and after RbfA during the maturation of 16S rRNA. It has affinity for free ribosomal 30S subunits but not for 70S ribosomes. This chain is Ribosome maturation factor RimM, found in Burkholderia pseudomallei (strain 1710b).